We begin with the raw amino-acid sequence, 485 residues long: Probable high-affinity nitrate transporter 2.4 (485 aa).

12 consecutive transmembrane segments (helical) span residues 56 to 76 (WMSL…LPAM), 80 to 100 (LVLA…ATLV), 119 to 139 (GVAS…ASSP), 147 to 167 (FVAG…SRIF), 177 to 197 (AVAA…MPVA), 215 to 235 (VTYL…LAFP), 270 to 290 (AWLL…MENV), 305 to 327 (AAGA…GGVA), 341 to 361 (LWAL…VGRM), 377 to 397 (VACA…VPFV), 405 to 425 (VSGM…RLFF), and 435 to 455 (AISC…LIHF).

It belongs to the major facilitator superfamily. Nitrate/nitrite porter (TC 2.A.1.8) family. In terms of tissue distribution, expressed in the base of the lateral root primordia, root-shoot junction zone, leaves, ends of the husk and vascular tissue of the anthers.

It is found in the cell membrane. Its function is as follows. Involved in nitrate transport. This chain is Probable high-affinity nitrate transporter 2.4 (NRT2.4), found in Oryza sativa subsp. japonica (Rice).